The sequence spans 300 residues: tRNA dimethylallyltransferase (300 aa).

11-18 contacts ATP; the sequence is GPTAVGKS. 13–18 contributes to the substrate binding site; that stretch reads TAVGKS. The tract at residues 35–38 is interaction with substrate tRNA; sequence DSIQ.

This sequence belongs to the IPP transferase family. As to quaternary structure, monomer. Requires Mg(2+) as cofactor.

The enzyme catalyses adenosine(37) in tRNA + dimethylallyl diphosphate = N(6)-dimethylallyladenosine(37) in tRNA + diphosphate. In terms of biological role, catalyzes the transfer of a dimethylallyl group onto the adenine at position 37 in tRNAs that read codons beginning with uridine, leading to the formation of N6-(dimethylallyl)adenosine (i(6)A). This is tRNA dimethylallyltransferase from Borreliella afzelii (strain PKo) (Borrelia afzelii).